The primary structure comprises 166 residues: Xanthine-guanine phosphoribosyltransferase (166 aa).

Residues 42–43 (RG) and 99–107 (DDLTDTGKT) contribute to the 5-phospho-alpha-D-ribose 1-diphosphate site. D100 provides a ligand contact to Mg(2+). Residues D103 and I146 each contribute to the guanine site. Residues D103 and I146 each coordinate xanthine. GMP is bound by residues 103 to 107 (DTGKT) and 145 to 146 (WI).

Belongs to the purine/pyrimidine phosphoribosyltransferase family. XGPT subfamily. As to quaternary structure, homotetramer. Requires Mg(2+) as cofactor.

It is found in the cell inner membrane. It catalyses the reaction GMP + diphosphate = guanine + 5-phospho-alpha-D-ribose 1-diphosphate. The catalysed reaction is XMP + diphosphate = xanthine + 5-phospho-alpha-D-ribose 1-diphosphate. The enzyme catalyses IMP + diphosphate = hypoxanthine + 5-phospho-alpha-D-ribose 1-diphosphate. It functions in the pathway purine metabolism; GMP biosynthesis via salvage pathway; GMP from guanine: step 1/1. Its pathway is purine metabolism; XMP biosynthesis via salvage pathway; XMP from xanthine: step 1/1. In terms of biological role, purine salvage pathway enzyme that catalyzes the transfer of the ribosyl-5-phosphate group from 5-phospho-alpha-D-ribose 1-diphosphate (PRPP) to the N9 position of the 6-oxopurines guanine and xanthine to form the corresponding ribonucleotides GMP (guanosine 5'-monophosphate) and XMP (xanthosine 5'-monophosphate), with the release of PPi. To a lesser extent, also acts on hypoxanthine. The sequence is that of Xanthine-guanine phosphoribosyltransferase from Mesorhizobium japonicum (strain LMG 29417 / CECT 9101 / MAFF 303099) (Mesorhizobium loti (strain MAFF 303099)).